The primary structure comprises 287 residues: Carbon monoxide dehydrogenase medium chain (287 aa).

An FAD-binding PCMH-type domain is found at 1–177; that stretch reads MIPPRFEYHA…VEIRVPAFAQ (177 aa). Residues 32 to 36 and 111 to 115 each bind FAD; these read AGGHS and TIGGD.

Dimer of heterotrimers. Each heterotrimer consists of a large, a medium and a small subunit. FAD is required as a cofactor.

The enzyme catalyses CO + a quinone + H2O = a quinol + CO2. Functionally, catalyzes the oxidation of carbon monoxide to carbon dioxide. In Hydrogenophaga pseudoflava (Pseudomonas carboxydoflava), this protein is Carbon monoxide dehydrogenase medium chain (cutM).